The following is a 347-amino-acid chain: Holliday junction branch migration complex subunit RuvB (347 aa).

Residues 1–186 are large ATPase domain (RuvB-L); the sequence is MKDENSINFL…FGITARFELY (186 aa). Residues Leu-25, Arg-26, Gly-67, Lys-70, Thr-71, Thr-72, 133 to 135, Arg-176, Tyr-186, and Arg-223 contribute to the ATP site; that span reads EDY. Thr-71 contributes to the Mg(2+) binding site. The tract at residues 187–257 is small ATPAse domain (RuvB-S); sequence SEIELVEIIK…IVSIGLEMLR (71 aa). The tract at residues 260-347 is head domain (RuvB-H); that stretch reads GEGLDEQDRN…DISENQRVSF (88 aa). Positions 315 and 320 each coordinate DNA.

Belongs to the RuvB family. Homohexamer. Forms an RuvA(8)-RuvB(12)-Holliday junction (HJ) complex. HJ DNA is sandwiched between 2 RuvA tetramers; dsDNA enters through RuvA and exits via RuvB. An RuvB hexamer assembles on each DNA strand where it exits the tetramer. Each RuvB hexamer is contacted by two RuvA subunits (via domain III) on 2 adjacent RuvB subunits; this complex drives branch migration. In the full resolvosome a probable DNA-RuvA(4)-RuvB(12)-RuvC(2) complex forms which resolves the HJ.

It localises to the cytoplasm. It carries out the reaction ATP + H2O = ADP + phosphate + H(+). Functionally, the RuvA-RuvB-RuvC complex processes Holliday junction (HJ) DNA during genetic recombination and DNA repair, while the RuvA-RuvB complex plays an important role in the rescue of blocked DNA replication forks via replication fork reversal (RFR). RuvA specifically binds to HJ cruciform DNA, conferring on it an open structure. The RuvB hexamer acts as an ATP-dependent pump, pulling dsDNA into and through the RuvAB complex. RuvB forms 2 homohexamers on either side of HJ DNA bound by 1 or 2 RuvA tetramers; 4 subunits per hexamer contact DNA at a time. Coordinated motions by a converter formed by DNA-disengaged RuvB subunits stimulates ATP hydrolysis and nucleotide exchange. Immobilization of the converter enables RuvB to convert the ATP-contained energy into a lever motion, pulling 2 nucleotides of DNA out of the RuvA tetramer per ATP hydrolyzed, thus driving DNA branch migration. The RuvB motors rotate together with the DNA substrate, which together with the progressing nucleotide cycle form the mechanistic basis for DNA recombination by continuous HJ branch migration. Branch migration allows RuvC to scan DNA until it finds its consensus sequence, where it cleaves and resolves cruciform DNA. The polypeptide is Holliday junction branch migration complex subunit RuvB (Borrelia garinii subsp. bavariensis (strain ATCC BAA-2496 / DSM 23469 / PBi) (Borreliella bavariensis)).